The following is an 816-amino-acid chain: Cation/H(+) antiporter 8 (816 aa).

The next 12 helical transmembrane spans lie at 64–84, 97–117, 127–147, 163–183, 197–214, 227–247, 255–275, 297–317, 343–363, 382–402, 413–433, and 447–467; these read PKLEIVILLVFFLWQGFNILF, MMLAGLLLNVLVTLSGENSII, IDVAGCLGSFGFLIFWFLKGV, VTGVAAVTFPIVVGFLLFNLK, VMLLMESITSFSGIARLL, VALSSALVSDIVGLLLLIANV, ADGLAILTEITLFLVIAFAVV, IHGVLVLVCLSCMYWEDLSQF, LESFNFGIILPLFLTAVMLRT, FAVASLVLLIFLLKLSVSVIV, SIILALIMSHKGIIELSFYLF, and ILVLSIVLNSLLIPMAIGFLY.

It belongs to the monovalent cation:proton antiporter 2 (CPA2) transporter (TC 2.A.37) family. CHX (TC 2.A.37.4) subfamily. Specifically expressed in pollen.

It is found in the membrane. Its function is as follows. May operate as a cation/H(+) antiporter. This chain is Cation/H(+) antiporter 8 (CHX8), found in Arabidopsis thaliana (Mouse-ear cress).